The primary structure comprises 299 residues: Non-homologous end-joining factor 1 (299 aa).

The tract at residues 1-135 (MEELEQGLLM…ASPSLVSQHL (135 aa)) is globular head. The stretch at 128-170 (PSLVSQHLIRPLMGMSLALQCQVRELATLLHMKDLEIQDYQES) forms a coiled coil. Residues S132, S203, S245, and S251 each carry the phosphoserine; by PRKDC modification. Residues 224 to 288 (QEVQVGQKHQ…GPLQRPQLSK (65 aa)) form a C-terminal tail region. A compositionally biased stretch (polar residues) spans 255 to 266 (NQPEQLVSSAPT). The segment at 255–299 (NQPEQLVSSAPTLSAPEKESTGTSGPLQRPQLSKVKRKKPRGLFS) is disordered. The residue at position 263 (S263) is a Phosphoserine. Residue T266 is modified to Phosphothreonine. Residue S287 is modified to Phosphoserine. Residues 288–299 (KVKRKKPRGLFS) show a composition bias toward basic residues. The short motif at 289 to 299 (VKRKKPRGLFS) is the XLM element.

This sequence belongs to the XRCC4-XLF family. XLF subfamily. As to quaternary structure, homodimer; mainly exists as a homodimer when not associated with XRCC4. Interacts with XRCC4; the interaction is direct and is mediated via a head-to-head interaction between N-terminal head regions. Component of the core long-range non-homologous end joining (NHEJ) complex (also named DNA-PK complex) composed of PRKDC, LIG4, XRCC4, XRCC6/Ku70, XRCC5/Ku86 and NHEJ1/XLF. Additional component of the NHEJ complex includes PAXX. Following autophosphorylation, PRKDC dissociates from DNA, leading to formation of the short-range NHEJ complex, composed of LIG4, XRCC4, XRCC6/Ku70, XRCC5/Ku86 and NHEJ1/XLF. Interacts with POLL (DNA polymerase lambda); promoting POLL recruitment to double-strand breaks (DSBs) and stimulation of the end-filling activity of POLL. In terms of processing, phosphorylated by PRKDC at the C-terminus in response to DNA damage. Phosphorylations by PRKDC at the C-terminus of XRCC4 and NHEJ1/XLF are highly redundant and regulate ability of the XRCC4-NHEJ1/XLF subcomplex to bridge DNA. Phosphorylation does not prevent interaction with XRCC4 but disrupts ability to bridge DNA and promotes detachment from DNA. As to expression, ubiquitously expressed.

The protein resides in the nucleus. It localises to the chromosome. Its function is as follows. DNA repair protein involved in DNA non-homologous end joining (NHEJ); it is required for double-strand break (DSB) repair and V(D)J recombination and is also involved in telomere maintenance. Plays a key role in NHEJ by promoting the ligation of various mismatched and non-cohesive ends. Together with PAXX, collaborates with DNA polymerase lambda (POLL) to promote joining of non-cohesive DNA ends. May act in concert with XRCC5-XRCC6 (Ku) to stimulate XRCC4-mediated joining of blunt ends and several types of mismatched ends that are non-complementary or partially complementary. In some studies, has been shown to associate with XRCC4 to form alternating helical filaments that bridge DNA and act like a bandage, holding together the broken DNA until it is repaired. Alternatively, it has also been shown that rather than forming filaments, a single NHEJ1 dimer interacts through both head domains with XRCC4 to promote the close alignment of DNA ends. The XRCC4-NHEJ1/XLF subcomplex binds to the DNA fragments of a DSB in a highly diffusive manner and robustly bridges two independent DNA molecules, holding the broken DNA fragments in close proximity to one other. The mobility of the bridges ensures that the ends remain accessible for further processing by other repair factors. Binds DNA in a length-dependent manner. The polypeptide is Non-homologous end-joining factor 1 (Homo sapiens (Human)).